We begin with the raw amino-acid sequence, 152 residues long: MLDKIDRKLLALLQQDCTLSLQALAEAVNLTTTPCWKRLKRLEDDGILIGKVALLDPEKIGLGLTAFVLIKTQHHSSEWYCRFVTVVTEMPEVLGFWRMAGEYDYLMRVQVADMKRYDEFYKRLVNSVPGLSDVTSSFAMEQIKYTTSLPIE.

Residues 2 to 63 (LDKIDRKLLA…LLDPEKIGLG (62 aa)) enclose the HTH asnC-type domain. A DNA-binding region (H-T-H motif) is located at residues 21-40 (LQALAEAVNLTTTPCWKRLK).

Functionally, plays a role in L-cysteine detoxification. Binds to the dlsT(yhaO)-yhaM operon promoter in the presence but not absence of L-cysteine; activates transcription from the dlsT(yhaO)-yhaM operon. The chain is DNA-binding transcriptional activator DecR (decR) from Escherichia coli O157:H7.